A 461-amino-acid polypeptide reads, in one-letter code: Acetylcholine receptor subunit alpha (461 aa).

The signal sequence occupies residues 1–24 (MILCSYWHVGLVLLLFSCCGLVLG). The Extracellular portion of the chain corresponds to 25–234 (SEHETRLVAN…ITYHFIMQRI (210 aa)). Intrachain disulfides connect Cys152-Cys166 and Cys216-Cys217. The N-linked (GlcNAc...) asparagine glycan is linked to Asn165. 3 helical membrane-spanning segments follow: residues 235-259 (PLYF…VFYL), 267-285 (MTLS…LVIV), and 301-320 (YMLF…VVVI). At 321–432 (NTHHRSPSTH…WKYVAMVIDH (112 aa)) the chain is on the cytoplasmic side. Residues 433 to 451 (ILLCVFMLICIIGTVSVFA) form a helical membrane-spanning segment.

The protein belongs to the ligand-gated ion channel (TC 1.A.9) family. Acetylcholine receptor (TC 1.A.9.1) subfamily. Alpha-1/CHRNA1 sub-subfamily. Pentamer of two alpha chains, and one each of the beta, delta, and gamma chains.

Its subcellular location is the postsynaptic cell membrane. The protein resides in the cell membrane. It carries out the reaction K(+)(in) = K(+)(out). It catalyses the reaction Na(+)(in) = Na(+)(out). Its function is as follows. Upon acetylcholine binding, the AChR responds by an extensive change in conformation that affects all subunits and leads to opening of an ion-conducting channel across the plasma membrane. In Torpedo marmorata (Marbled electric ray), this protein is Acetylcholine receptor subunit alpha (CHRNA1).